We begin with the raw amino-acid sequence, 1173 residues long: Thrombospondin-1 (1173 aa).

An N-terminal signal peptide occupies residues 1–18 (MKGIFLLLMLVMPQTHQA). The Laminin G-like domain occupies 22 to 224 (GNDDNSVFDL…LQNVRFVFGT (203 aa)). Residues 50–98 (HLVKGPDPSSPAYRIEDADLIPPLPEDKFQDLLDAIRADRGFILLATLR) are heparin-binding. 2 N-linked (GlcNAc...) asparagine glycosylation sites follow: N155 and N158. Residues C174 and C235 are joined by a disulfide bond. N250 and N363 each carry an N-linked (GlcNAc...) asparagine glycan. Residues 319 to 376 (GVCLHNGVLHKNRDEWTVDSCTECTCQNSATICRKVSCPLMPCTNATIPDGECCPRCW) form the VWFC domain. TSP type-1 domains lie at 382–432 (DDDW…QDCD), 438–493 (DGGW…DPCP), and 495–550 (NGQW…QDCP). Cystine bridges form between C394–C426, C398–C431, C409–C416, C450–C487, C454–C492, C465–C477, C507–C544, C511–C549, C522–C534, C554–C565, C559–C575, C578–C589, C595–C611, C602–C620, C623–C647, C653–C666, C660–C679, and C681–C692. The EGF-like 1 domain occupies 550–590 (PIDGCLSNPCFAGVKCTSFIDGSWKCGSCPPGYRGNGITCK). The EGF-like 2 domain occupies 649–693 (PRNPCADGTHDCHKNARCIYLGHYSDPMFRCECRPGYAGNGIICG). 8 TSP type-3 repeats span residues 694 to 729 (EDTDLDGWPNENLTCVDNATYHCLKDNCPNLPNSGQ), 730 to 765 (EDYDKDGMGDACDKDDDNDGILDDRDNCQFVYNPAQ), 766 to 788 (YDYDRDDVGDRCDNCPYNHNPDQ), 789 to 824 (ADTDRNGEGDACSVDIDGDGILNERDNCAYVYNVDQ), 825 to 847 (KDTDKDGVGDQCDNCPLEHNPEQ), 848 to 885 (TDSDSDLIGDKCDNNQDIDEDGHQNNLDNCPYIPNANQ), 886 to 921 (ADHDKDGKGDACDHDDDNDGVPDDKDNCRLVPNPDQ), and 922 to 957 (TDTNGDGRGDACQYDFDDDSIPDAEDVCPENVEIST). Residues N705 and N711 are each glycosylated (N-linked (GlcNAc...) asparagine). Disulfide bonds link C708–C716, C721–C741, C757–C777, C780–C800, C816–C836, C839–C859, C877–C897, C913–C933, and C949–C1170. The disordered stretch occupies residues 838–935 (NCPLEHNPEQ…GDGRGDACQY (98 aa)). Positions 886 to 897 (ADHDKDGKGDAC) are enriched in basic and acidic residues. The Cell attachment site signature appears at 929 to 931 (RGD). The region spanning 961 to 1173 (RKFQMVPLDP…SDLKYECRDS (213 aa)) is the TSP C-terminal domain. N1070 carries an N-linked (GlcNAc...) asparagine glycan.

This sequence belongs to the thrombospondin family. As to quaternary structure, homotrimer; disulfide-linked.

Its subcellular location is the secreted. It localises to the cell surface. The protein resides in the extracellular space. It is found in the extracellular matrix. The protein localises to the endoplasmic reticulum. Its subcellular location is the sarcoplasmic reticulum. Its function is as follows. Adhesive glycoprotein that mediates cell-to-cell and cell-to-matrix interactions. Can bind to fibrinogen, fibronectin, laminin, type V collagen and integrins alpha-V/beta-1, alpha-V/beta-3 and alpha-IIb/beta-3. May play a role in ER stress response. The sequence is that of Thrombospondin-1 (thbs1) from Xenopus laevis (African clawed frog).